Consider the following 46-residue polypeptide: Large ribosomal subunit protein bL33A (46 aa).

The protein belongs to the bacterial ribosomal protein bL33 family.

The sequence is that of Large ribosomal subunit protein bL33A from Mesomycoplasma hyopneumoniae (strain 7448) (Mycoplasma hyopneumoniae).